The primary structure comprises 130 residues: C-type natriuretic peptide 2 (130 aa).

An N-terminal signal peptide occupies residues Met1 to Pro22. The propeptide occupies Arg23 to Arg103. The disordered stretch occupies residues Glu57 to Arg77. Cys114 and Cys130 form a disulfide bridge.

Belongs to the natriuretic peptide family.

It is found in the secreted. Exhibits natriuretic and vasodepressant activity. Has cGMP-stimulating activity. May help to regulate body fluid homeostasis in a variety of aquatic environments. The protein is C-type natriuretic peptide 2 of Takifugu rubripes (Japanese pufferfish).